Consider the following 546-residue polypeptide: ATP-dependent rRNA helicase RRP3 (546 aa).

A disordered region spans residues 1–108 (MSDFKRRKLE…DEEAEAQAAA (108 aa)). 2 stretches are compositionally biased toward acidic residues: residues 60–77 (SEED…EEED) and 94–103 (EAEQSDEEAE). The short motif at 115–143 (KTFADLGVREELCDACENLGYKTATPIQT) is the Q motif element. The 173-residue stretch at 146 to 318 (IPLALAGKDI…RAALKNPVRV (173 aa)) folds into the Helicase ATP-binding domain. An ATP-binding site is contributed by 159 to 166 (AETGSGKT). The short motif at 265–268 (DEAD) is the DEAD box element. The Helicase C-terminal domain occupies 342 to 490 (YKDLYLIHLL…EEKVSRDEVM (149 aa)). A compositionally biased stretch (basic and acidic residues) spans 504 to 515 (VREMKDLHDQRK). The disordered stretch occupies residues 504–546 (VREMKDLHDQRKSGRGGRGGGRGGGRGGRGRGGRRDNMDMDEG). Residues 519–530 (GGRGGGRGGGRG) are compositionally biased toward gly residues. Positions 536–546 (GRRDNMDMDEG) are enriched in basic and acidic residues.

Belongs to the DEAD box helicase family. DDX47/RRP3 subfamily. In terms of assembly, interacts with the SSU processome.

It localises to the nucleus. The enzyme catalyses ATP + H2O = ADP + phosphate + H(+). ATP-dependent rRNA helicase required for pre-ribosomal RNA processing. Involved in the maturation of the 35S-pre-rRNA and to its cleavage to mature 18S rRNA. The sequence is that of ATP-dependent rRNA helicase RRP3 from Phaeosphaeria nodorum (strain SN15 / ATCC MYA-4574 / FGSC 10173) (Glume blotch fungus).